The chain runs to 331 residues: Tungstate uptake system ATP-binding protein TupC (331 aa).

An ABC transporter domain is found at 2 to 230 (IEISNLFFNY…NQGVKFCNFI (229 aa)). 34-41 (GANGSGKS) serves as a coordination point for ATP.

The protein belongs to the ABC transporter superfamily. As to quaternary structure, the complex is composed of two ATP-binding proteins (TupC), two transmembrane proteins (TupB) and a solute-binding protein (TupA).

The catalysed reaction is tungstate(in) + ATP + H2O = tungstate(out) + ADP + phosphate + H(+). Its function is as follows. Part of an ABC transporter complex involved in ultra-high affinity tungstate uptake. Probably responsible for energy coupling to the transport system. The chain is Tungstate uptake system ATP-binding protein TupC from Campylobacter jejuni subsp. jejuni serotype O:2 (strain ATCC 700819 / NCTC 11168).